The sequence spans 444 residues: Xylose isomerase (444 aa).

Active-site residues include histidine 101 and aspartate 104. Mg(2+) contacts are provided by glutamate 232, glutamate 268, histidine 271, aspartate 296, aspartate 307, aspartate 309, and aspartate 339.

This sequence belongs to the xylose isomerase family. Homotetramer. Mg(2+) serves as cofactor.

It is found in the cytoplasm. It catalyses the reaction alpha-D-xylose = alpha-D-xylulofuranose. This is Xylose isomerase from Thermotoga sp. (strain RQ2).